A 316-amino-acid polypeptide reads, in one-letter code: Aspartate carbamoyltransferase catalytic subunit (316 aa).

Residues R56 and T57 each coordinate carbamoyl phosphate. Position 84 (K84) interacts with L-aspartate. 3 residues coordinate carbamoyl phosphate: R106, H139, and Q142. 2 residues coordinate L-aspartate: R172 and R226. Carbamoyl phosphate contacts are provided by G267 and P268.

This sequence belongs to the aspartate/ornithine carbamoyltransferase superfamily. ATCase family. In terms of assembly, heterododecamer (2C3:3R2) of six catalytic PyrB chains organized as two trimers (C3), and six regulatory PyrI chains organized as three dimers (R2).

The enzyme catalyses carbamoyl phosphate + L-aspartate = N-carbamoyl-L-aspartate + phosphate + H(+). Its pathway is pyrimidine metabolism; UMP biosynthesis via de novo pathway; (S)-dihydroorotate from bicarbonate: step 2/3. Functionally, catalyzes the condensation of carbamoyl phosphate and aspartate to form carbamoyl aspartate and inorganic phosphate, the committed step in the de novo pyrimidine nucleotide biosynthesis pathway. This chain is Aspartate carbamoyltransferase catalytic subunit, found in Mycobacterium sp. (strain JLS).